The following is a 144-amino-acid chain: ATP synthase epsilon chain (144 aa).

Belongs to the ATPase epsilon chain family. F-type ATPases have 2 components, CF(1) - the catalytic core - and CF(0) - the membrane proton channel. CF(1) has five subunits: alpha(3), beta(3), gamma(1), delta(1), epsilon(1). CF(0) has three main subunits: a, b and c.

It is found in the cell inner membrane. Functionally, produces ATP from ADP in the presence of a proton gradient across the membrane. The polypeptide is ATP synthase epsilon chain (Ectopseudomonas mendocina (strain ymp) (Pseudomonas mendocina)).